Consider the following 291-residue polypeptide: MAAGKEIRGKIKSVENTKKITKAMEMVSVSKMRKAQERMRAARPYSEKIRNIAANLGKANPEYTHAFMKKNEAKAIGFIIVTSDKGLCGGLNTNLLRAVTGKLREAQSAGIAIESVAIGSKGLGFLNRIGARVVAHVTHLGDTPHLDKLIGPVKTLLDAYAEGKLSAVYLCYTKFINTIKQEPLVEQLLPLAADSLQVEAGQHSWDYIYEPDAQSVIDELLVRYVESLVYQAVAENMASEHSARMVAMKAATDNAGNVINELKLVYNKTRQAGITKELSEIVSGAAAAAGV.

Belongs to the ATPase gamma chain family. In terms of assembly, F-type ATPases have 2 components, CF(1) - the catalytic core - and CF(0) - the membrane proton channel. CF(1) has five subunits: alpha(3), beta(3), gamma(1), delta(1), epsilon(1). CF(0) has three main subunits: a, b and c.

It is found in the cell inner membrane. Its function is as follows. Produces ATP from ADP in the presence of a proton gradient across the membrane. The gamma chain is believed to be important in regulating ATPase activity and the flow of protons through the CF(0) complex. The sequence is that of ATP synthase gamma chain from Variovorax paradoxus (strain S110).